The sequence spans 1165 residues: Tectonin beta-propeller repeat-containing protein 1 (1165 aa).

4 TECPR repeats span residues 209–240 (LSVW…SLLD), 254–285 (DLLW…SIVE), 301–332 (SVVW…IEMV), and 344–376 (DQVW…KAII). A phosphoserine mark is found at S386, S388, S391, S412, and S417. The disordered stretch occupies residues 404 to 486 (RGSGESAPSD…GPAPTPAELP (83 aa)). The PH domain maps to 611-717 (KTGALQWWCD…WLALLSLSCC (107 aa)). One copy of the TECPR 5 repeat lies at 729–756 (QAIWSITCKGDIFVSEPSPDLEAHEHPL). S938 and S949 each carry phosphoserine. TECPR repeat units lie at residues 953–984 (IALW…LHVG), 998–1029 (YQVW…YHIP), 1044–1075 (TSVY…EHVS), and 1087–1127 (DQVW…DYGI). Positions 1140–1165 (ATRAPRSSSQEQEPSAPPEAHGPVCC) are disordered. The segment covering 1143-1153 (APRSSSQEQEP) has biased composition (low complexity).

Belongs to the TECPR1 family. In terms of assembly, interacts with ATG5; the interaction is direct. Interacts with WIPI2. Interacts with the ATG5-ATG12 conjugate, the interaction is however mutually exclusive with ATG16, since it does not interact with ATG12-ATG5-ATG16 complex.

Its subcellular location is the cytoplasmic vesicle. It localises to the autophagosome membrane. It is found in the lysosome membrane. In terms of biological role, tethering factor involved in autophagy. Involved in autophagosome maturation by promoting the autophagosome fusion with lysosomes: acts by associating with both the ATG5-ATG12 conjugate and phosphatidylinositol-3-phosphate (PtdIns(3)P) present at the surface of autophagosomes. Also involved in selective autophagy against bacterial pathogens, by being required for phagophore/preautophagosomal structure biogenesis and maturation. The chain is Tectonin beta-propeller repeat-containing protein 1 (TECPR1) from Homo sapiens (Human).